A 655-amino-acid chain; its full sequence is Kelch-like protein 13 (655 aa).

Residues 92–161 (CDVTLMPGDT…IYTAKLSLNM (70 aa)) form the BTB domain. One can recognise a BACK domain in the interval 196–297 (CVEVGRIANT…TPQELINYVQ (102 aa)). 6 Kelch repeats span residues 341-389 (HLVT…VIGN), 390-441 (FLYV…ALKG), 442-488 (YLYA…VYGG), 490-535 (MYIS…TVGE), 537-587 (LYVI…VFEN), and 588-636 (KIYV…TLTV).

As to quaternary structure, component of the BCR(KLHL9-KLHL13) E3 ubiquitin ligase complex, at least composed of CUL3, KLHL9, KLHL13 and RBX1. Interacts with AURKB.

Its pathway is protein modification; protein ubiquitination. Its function is as follows. Substrate-specific adapter of a BCR (BTB-CUL3-RBX1) E3 ubiquitin-protein ligase complex required for mitotic progression and cytokinesis. The BCR(KLHL9-KLHL13) E3 ubiquitin ligase complex mediates the ubiquitination of AURKB and controls the dynamic behavior of AURKB on mitotic chromosomes and thereby coordinates faithful mitotic progression and completion of cytokinesis. The protein is Kelch-like protein 13 (KLHL13) of Bos taurus (Bovine).